The primary structure comprises 554 residues: 3-(3-hydroxy-phenyl)propionate/3-hydroxycinnamic acid hydroxylase (554 aa).

Residues 17–46 (QVAI…VVEK) and 285–295 (FRINRVLLAGD) each bind FAD.

It belongs to the PheA/TfdB FAD monooxygenase family. Requires FAD as cofactor.

The enzyme catalyses 3-(3-hydroxyphenyl)propanoate + NADH + O2 + H(+) = 3-(2,3-dihydroxyphenyl)propanoate + NAD(+) + H2O. It catalyses the reaction (2E)-3-(3-hydroxyphenyl)prop-2-enoate + NADH + O2 + H(+) = (2E)-3-(2,3-dihydroxyphenyl)prop-2-enoate + NAD(+) + H2O. It functions in the pathway aromatic compound metabolism; 3-phenylpropanoate degradation. Its function is as follows. Catalyzes the insertion of one atom of molecular oxygen into position 2 of the phenyl ring of 3-(3-hydroxyphenyl)propionate (3-HPP) and hydroxycinnamic acid (3HCI). The polypeptide is 3-(3-hydroxy-phenyl)propionate/3-hydroxycinnamic acid hydroxylase (Klebsiella pneumoniae subsp. pneumoniae (strain ATCC 700721 / MGH 78578)).